The sequence spans 251 residues: Probable transcriptional regulatory protein cbdbA400 (251 aa).

This sequence belongs to the TACO1 family.

It is found in the cytoplasm. The polypeptide is Probable transcriptional regulatory protein cbdbA400 (Dehalococcoides mccartyi (strain CBDB1)).